A 344-amino-acid polypeptide reads, in one-letter code: tRNA N6-adenosine threonylcarbamoyltransferase (344 aa).

Positions 112 and 116 each coordinate Fe cation. Substrate is bound by residues 135-139, Asp-168, Gly-181, and Asn-271; that span reads LVSGG. Asp-299 is a binding site for Fe cation.

It belongs to the KAE1 / TsaD family. Fe(2+) is required as a cofactor.

Its subcellular location is the cytoplasm. It carries out the reaction L-threonylcarbamoyladenylate + adenosine(37) in tRNA = N(6)-L-threonylcarbamoyladenosine(37) in tRNA + AMP + H(+). Functionally, required for the formation of a threonylcarbamoyl group on adenosine at position 37 (t(6)A37) in tRNAs that read codons beginning with adenine. Is involved in the transfer of the threonylcarbamoyl moiety of threonylcarbamoyl-AMP (TC-AMP) to the N6 group of A37, together with TsaE and TsaB. TsaD likely plays a direct catalytic role in this reaction. The sequence is that of tRNA N6-adenosine threonylcarbamoyltransferase from Sphingopyxis alaskensis (strain DSM 13593 / LMG 18877 / RB2256) (Sphingomonas alaskensis).